We begin with the raw amino-acid sequence, 624 residues long: Na(+)/H(+) antiporter NhaA (624 aa).

The interval 1 to 164 (MNPELPPNHL…TFFINGRRYD (164 aa)) is unknown. A na(+)/H(+) antiporter NhaA region spans residues 165-624 (GPWDVRSLSE…NAQAEEEKNP (460 aa)). A run of 11 helical transmembrane segments spans residues 199 to 219 (GIML…ALGP), 240 to 260 (LSLR…VVGL), 279 to 299 (LPIA…LILV), 319 to 339 (GWGV…AMMG), 348 to 368 (VFLT…VAIF), 371 to 391 (GELH…LALL), 407 to 427 (IVLW…GIIL), 497 to 517 (FLVL…TSVF), 521 to 541 (IPLM…GFIT), 565 to 585 (GAGA…SQAF), and 596 to 616 (IAIF…LWNA).

This sequence belongs to the NhaA Na(+)/H(+) (TC 2.A.33) antiporter family.

Its subcellular location is the cell inner membrane. It carries out the reaction Na(+)(in) + 2 H(+)(out) = Na(+)(out) + 2 H(+)(in). In terms of biological role, na(+)/H(+) antiporter that extrudes sodium in exchange for external protons. The sequence is that of Na(+)/H(+) antiporter NhaA from Nitrosospira multiformis (strain ATCC 25196 / NCIMB 11849 / C 71).